The following is a 64-amino-acid chain: Large ribosomal subunit protein bL32 (64 aa).

The interval 1 to 36 (MAVQKSRVTPSRRGQRRSHDALSAKQLSTDPTTGEV) is disordered.

Belongs to the bacterial ribosomal protein bL32 family.

The chain is Large ribosomal subunit protein bL32 from Stenotrophomonas maltophilia (strain K279a).